We begin with the raw amino-acid sequence, 650 residues long: Putative polypeptide N-acetylgalactosaminyltransferase 9 (650 aa).

The Cytoplasmic portion of the chain corresponds to Met-1 to Thr-11. Residues Ile-12–Tyr-31 form a helical; Signal-anchor for type II membrane protein membrane-spanning segment. At Thr-32–Leu-650 the chain is on the lumenal side. The interval Asn-84 to Arg-154 is disordered. The span at His-107 to Ile-136 shows a compositional bias: basic and acidic residues. 5 disulfides stabilise this stretch: Cys-198–Cys-432, Cys-423–Cys-499, Cys-535–Cys-554, Cys-577–Cys-590, and Cys-616–Cys-631. Residues Leu-208–Arg-317 are catalytic subdomain A. Positions 216, 249, and 278 each coordinate substrate. Mn(2+) is bound at residue Asp-301. Ser-302 and His-303 together coordinate substrate. His-303 serves as a coordination point for Mn(2+). N-linked (GlcNAc...) asparagine glycosylation is found at Asn-321 and Asn-373. The tract at residues Pro-378 to Arg-440 is catalytic subdomain B. His-437 is a Mn(2+) binding site. Positions 440 and 445 each coordinate substrate. The 123-residue stretch at Ala-521–Glu-643 folds into the Ricin B-type lectin domain.

The protein belongs to the glycosyltransferase 2 family. GalNAc-T subfamily. In terms of assembly, isoform A forms homotetramer. Isoform B forms homodimer. Requires Mn(2+) as cofactor.

The protein resides in the golgi apparatus membrane. It carries out the reaction L-seryl-[protein] + UDP-N-acetyl-alpha-D-galactosamine = a 3-O-[N-acetyl-alpha-D-galactosaminyl]-L-seryl-[protein] + UDP + H(+). It catalyses the reaction L-threonyl-[protein] + UDP-N-acetyl-alpha-D-galactosamine = a 3-O-[N-acetyl-alpha-D-galactosaminyl]-L-threonyl-[protein] + UDP + H(+). It functions in the pathway protein modification; protein glycosylation. Catalyzes the initial reaction in O-linked oligosaccharide biosynthesis, the transfer of an N-acetyl-D-galactosamine residue to a serine or threonine residue on the protein receptor. It can both act as a peptide transferase that transfers GalNAc onto unmodified peptide substrates, and as a glycopeptide transferase that requires the prior addition of a GalNAc on a peptide before adding additional GalNAc moieties. Its function is as follows. N-acetylgalactosaminyltransferase which preferentially O-glycosylates negatively charge substrates. O-glycosylates mucin-like protein Sgs3 in the salivary gland but to a lesser extent than isoform B. By regulating the O-glycosylation of secretory cargo proteins plays a role in the morphology and maturation of salivary gland secretory granules. In terms of biological role, N-acetylgalactosaminyltransferase which preferentially O-glycosylates positively charge substrates. O-glycosylates mucin-like protein Sgs3 in the salivary gland. By regulating the O-glycosylation of secretory cargo proteins, plays a role in the morphology and maturation of salivary gland secretory granules. The sequence is that of Putative polypeptide N-acetylgalactosaminyltransferase 9 from Drosophila melanogaster (Fruit fly).